A 340-amino-acid polypeptide reads, in one-letter code: DNA-directed RNA polymerase subunit alpha (340 aa).

The tract at residues 1-233 is alpha N-terminal domain (alpha-NTD); the sequence is MYKNWRDLIR…EQLSIFINFD (233 aa). The segment at 246 to 340 is alpha C-terminal domain (alpha-CTD); it reads DEIDKINENL…RLRGEQNEEE (95 aa).

The protein belongs to the RNA polymerase alpha chain family. In terms of assembly, homodimer. The RNAP catalytic core consists of 2 alpha, 1 beta, 1 beta' and 1 omega subunit. When a sigma factor is associated with the core the holoenzyme is formed, which can initiate transcription.

The catalysed reaction is RNA(n) + a ribonucleoside 5'-triphosphate = RNA(n+1) + diphosphate. In terms of biological role, DNA-dependent RNA polymerase catalyzes the transcription of DNA into RNA using the four ribonucleoside triphosphates as substrates. This is DNA-directed RNA polymerase subunit alpha from Pelobacter propionicus (strain DSM 2379 / NBRC 103807 / OttBd1).